Consider the following 352-residue polypeptide: Chymopapain (352 aa).

A signal peptide spans 1 to 18 (MATMSSISKIIFLATCLI). A propeptide spans 19–134 (IHMGLSSADF…EDFTYKHVTN (116 aa)) (activation peptide). An N-linked (GlcNAc...) asparagine glycan is attached at Asn86. 3 disulfide bridges follow: Cys156–Cys197, Cys190–Cys229, and Cys287–Cys338. Cys159 is a catalytic residue. Residues His293 and Asn313 contribute to the active site.

It belongs to the peptidase C1 family.

It carries out the reaction Specificity similar to that of papain.. Functionally, cysteine proteinase with a high level of diversity in substrate specificity. This Carica papaya (Papaya) protein is Chymopapain.